The following is a 135-amino-acid chain: HTH-type transcriptional regulator CueR (135 aa).

In terms of domain architecture, HTH merR-type spans 1 to 69; that stretch reads MNISDVAKIT…LEESGELVNL (69 aa). A DNA-binding region (H-T-H motif) is located at residues 4 to 23; sequence SDVAKITGLTSKAIRFYEEK. Residues cysteine 112 and cysteine 120 each coordinate Cu(+).

Homodimer.

Its subcellular location is the cytoplasm. Functionally, regulates the transcription of the copA and cueO genes. It detects cytoplasmic copper stress and activates transcription in response to increasing copper concentrations. This chain is HTH-type transcriptional regulator CueR (cueR), found in Escherichia coli O6:H1 (strain CFT073 / ATCC 700928 / UPEC).